Here is a 1159-residue protein sequence, read N- to C-terminus: PAN2-PAN3 deadenylation complex catalytic subunit pan2 (1159 aa).

Residues 276–315 (ANVSFMLGIDISPSGEALAINDAECMVHLWGSPAKIHFNE) form a WD repeat. The interval 316 to 451 (MSKEVELADV…GAKLNGEAED (136 aa)) is linker. The USP domain maps to 452–821 (DPLLKYSNVE…VPCVLAFQVK (370 aa)). Residues 872–1048 (LDTEFVDLEK…IEDARMALRL (177 aa)) enclose the Exonuclease domain. 4 residues coordinate a divalent metal cation: D873, E875, D982, and D1041. Residues 1094–1159 (TAVTMQNTNS…GDFFGGSPLK (66 aa)) are disordered. Residues 1096–1106 (VTMQNTNSGRN) show a composition bias toward polar residues. Residues 1107 to 1128 (TPTVPDAAGAPAVPASAPTTPG) show a composition bias toward low complexity. The span at 1143–1153 (TFSGPGAGDFF) shows a compositional bias: gly residues.

The protein belongs to the peptidase C19 family. PAN2 subfamily. As to quaternary structure, forms a heterotrimer with an asymmetric homodimer of the regulatory subunit pan3 to form the poly(A)-nuclease (PAN) deadenylation complex. A divalent metal cation serves as cofactor.

It is found in the cytoplasm. It carries out the reaction Exonucleolytic cleavage of poly(A) to 5'-AMP.. With respect to regulation, positively regulated by the regulatory subunit pan3. Catalytic subunit of the poly(A)-nuclease (PAN) deadenylation complex, one of two cytoplasmic mRNA deadenylases involved in mRNA turnover. PAN specifically shortens poly(A) tails of RNA and the activity is stimulated by poly(A)-binding protein pab1. PAN deadenylation is followed by rapid degradation of the shortened mRNA tails by the CCR4-NOT complex. Deadenylated mRNAs are then degraded by two alternative mechanisms, namely exosome-mediated 3'-5' exonucleolytic degradation, or deadenylation-dependent mRNA decaping and subsequent 5'-3' exonucleolytic degradation by xrn1. May also be involved in post-transcriptional maturation of mRNA poly(A) tails. In Aspergillus terreus (strain NIH 2624 / FGSC A1156), this protein is PAN2-PAN3 deadenylation complex catalytic subunit pan2.